The sequence spans 350 residues: tRNA uridine(34) hydroxylase (350 aa).

In terms of domain architecture, Rhodanese spans Asp-146–Leu-240. Cys-200 (cysteine persulfide intermediate) is an active-site residue. The tract at residues Pro-314 to Glu-350 is disordered. Basic and acidic residues predominate over residues Glu-316–Gly-328.

This sequence belongs to the TrhO family.

It carries out the reaction uridine(34) in tRNA + AH2 + O2 = 5-hydroxyuridine(34) in tRNA + A + H2O. In terms of biological role, catalyzes oxygen-dependent 5-hydroxyuridine (ho5U) modification at position 34 in tRNAs. This chain is tRNA uridine(34) hydroxylase, found in Citrobacter koseri (strain ATCC BAA-895 / CDC 4225-83 / SGSC4696).